The primary structure comprises 147 residues: D-aminoacyl-tRNA deacylase (147 aa).

The Gly-cisPro motif, important for rejection of L-amino acids signature appears at 137 to 138 (GP).

Belongs to the DTD family. Homodimer.

The protein localises to the cytoplasm. It catalyses the reaction glycyl-tRNA(Ala) + H2O = tRNA(Ala) + glycine + H(+). It carries out the reaction a D-aminoacyl-tRNA + H2O = a tRNA + a D-alpha-amino acid + H(+). An aminoacyl-tRNA editing enzyme that deacylates mischarged D-aminoacyl-tRNAs. Also deacylates mischarged glycyl-tRNA(Ala), protecting cells against glycine mischarging by AlaRS. Acts via tRNA-based rather than protein-based catalysis; rejects L-amino acids rather than detecting D-amino acids in the active site. By recycling D-aminoacyl-tRNA to D-amino acids and free tRNA molecules, this enzyme counteracts the toxicity associated with the formation of D-aminoacyl-tRNA entities in vivo and helps enforce protein L-homochirality. Upon expression in B.subtilis strain 168 confers resistance to D-Tyr and D-Asp, suggesting it acts on both of these amino acids. The sequence is that of D-aminoacyl-tRNA deacylase from Bacillus amyloliquefaciens (Bacillus velezensis).